The primary structure comprises 296 residues: Phosphatidylserine decarboxylase proenzyme (296 aa).

Active-site charge relay system; for autoendoproteolytic cleavage activity residues include D113, H169, and S256. The Schiff-base intermediate with substrate; via pyruvic acid; for decarboxylase activity role is filled by S256. S256 is subject to Pyruvic acid (Ser); by autocatalysis.

Belongs to the phosphatidylserine decarboxylase family. PSD-B subfamily. Prokaryotic type II sub-subfamily. Heterodimer of a large membrane-associated beta subunit and a small pyruvoyl-containing alpha subunit. The cofactor is pyruvate. Is synthesized initially as an inactive proenzyme. Formation of the active enzyme involves a self-maturation process in which the active site pyruvoyl group is generated from an internal serine residue via an autocatalytic post-translational modification. Two non-identical subunits are generated from the proenzyme in this reaction, and the pyruvate is formed at the N-terminus of the alpha chain, which is derived from the carboxyl end of the proenzyme. The autoendoproteolytic cleavage occurs by a canonical serine protease mechanism, in which the side chain hydroxyl group of the serine supplies its oxygen atom to form the C-terminus of the beta chain, while the remainder of the serine residue undergoes an oxidative deamination to produce ammonia and the pyruvoyl prosthetic group on the alpha chain. During this reaction, the Ser that is part of the protease active site of the proenzyme becomes the pyruvoyl prosthetic group, which constitutes an essential element of the active site of the mature decarboxylase.

The protein resides in the cell membrane. The enzyme catalyses a 1,2-diacyl-sn-glycero-3-phospho-L-serine + H(+) = a 1,2-diacyl-sn-glycero-3-phosphoethanolamine + CO2. Its pathway is phospholipid metabolism; phosphatidylethanolamine biosynthesis; phosphatidylethanolamine from CDP-diacylglycerol: step 2/2. Its function is as follows. Catalyzes the formation of phosphatidylethanolamine (PtdEtn) from phosphatidylserine (PtdSer). This chain is Phosphatidylserine decarboxylase proenzyme, found in Clostridium botulinum (strain Alaska E43 / Type E3).